The primary structure comprises 191 residues: Glutathione-dependent formaldehyde-activating enzyme (191 aa).

The CENP-V/GFA domain maps to F22–D169. Zn(2+) contacts are provided by C29, C31, C50, C52, C55, C97, and C100.

The protein belongs to the Gfa family. Requires Zn(2+) as cofactor.

It catalyses the reaction S-(hydroxymethyl)glutathione = glutathione + formaldehyde. It functions in the pathway one-carbon metabolism; formaldehyde degradation; formate from formaldehyde (glutathione route): step 1/3. In terms of biological role, catalyzes the condensation of formaldehyde and glutathione to S-hydroxymethylglutathione. This is Glutathione-dependent formaldehyde-activating enzyme from Xanthomonas axonopodis pv. citri (strain 306).